The following is a 176-amino-acid chain: Ribosome maturation factor RimM (176 aa).

The 74-residue stretch at 102–175 (KNDYYWNDII…TDKKFILVQW (74 aa)) folds into the PRC barrel domain.

It belongs to the RimM family. As to quaternary structure, binds ribosomal protein uS19.

The protein localises to the cytoplasm. Functionally, an accessory protein needed during the final step in the assembly of 30S ribosomal subunit, possibly for assembly of the head region. Essential for efficient processing of 16S rRNA. May be needed both before and after RbfA during the maturation of 16S rRNA. It has affinity for free ribosomal 30S subunits but not for 70S ribosomes. The chain is Ribosome maturation factor RimM from Buchnera aphidicola subsp. Acyrthosiphon pisum (strain APS) (Acyrthosiphon pisum symbiotic bacterium).